The following is a 354-amino-acid chain: Cysteine proteinase 1 (354 aa).

An N-terminal signal peptide occupies residues 1–24 (MARRNPLLFAIVVTILFVVCYGSA). Residues 25 to 125 (LIAQTPPPVD…HKEDVHVDDS (101 aa)) constitute a propeptide, activation peptide. 3 cysteine pairs are disulfide-bonded: Cys-150-Cys-191, Cys-184-Cys-229, and Cys-282-Cys-330. Cys-153 is a catalytic residue. N-linked (GlcNAc...) asparagine glycosylation is present at Asn-208. Active-site residues include His-289 and Asn-309.

The protein belongs to the peptidase C1 family.

Functionally, the cysteine proteinases have a potential role in host-parasite interaction and virulence. This Leishmania pifanoi protein is Cysteine proteinase 1 (CYS1).